Here is a 267-residue protein sequence, read N- to C-terminus: Hydroxyethylthiazole kinase 2 (267 aa).

Substrate is bound at residue methionine 41. Residues lysine 116 and threonine 166 each coordinate ATP. Glycine 193 provides a ligand contact to substrate.

It belongs to the Thz kinase family. The cofactor is Mg(2+).

It catalyses the reaction 5-(2-hydroxyethyl)-4-methylthiazole + ATP = 4-methyl-5-(2-phosphooxyethyl)-thiazole + ADP + H(+). Its pathway is cofactor biosynthesis; thiamine diphosphate biosynthesis; 4-methyl-5-(2-phosphoethyl)-thiazole from 5-(2-hydroxyethyl)-4-methylthiazole: step 1/1. Functionally, catalyzes the phosphorylation of the hydroxyl group of 4-methyl-5-beta-hydroxyethylthiazole (THZ). The protein is Hydroxyethylthiazole kinase 2 of Streptococcus pneumoniae (strain JJA).